We begin with the raw amino-acid sequence, 115 residues long: Large ribosomal subunit protein bL20c (115 aa).

Belongs to the bacterial ribosomal protein bL20 family.

The protein resides in the plastid. It is found in the chloroplast. Functionally, binds directly to 23S ribosomal RNA and is necessary for the in vitro assembly process of the 50S ribosomal subunit. It is not involved in the protein synthesizing functions of that subunit. The sequence is that of Large ribosomal subunit protein bL20c (rpl20) from Cyanidium caldarium (Red alga).